Reading from the N-terminus, the 400-residue chain is MSKNRRLFTSESVTEGHPDKICDQISDSILDEILKKDPNARVACETSVTTGLVLVSGEITTSTYVDIPKTVRQTIKEIGYTRAKYGFDAETCAVLTSIDEQSADIAMGVDQALEAREGTMSDEEIEAIGAGDQGLMFGYACNETKELMPLPISLAHKLARRLSEVRKEDILPYLRPDGKTQVTVEYDENNKPVRIDAIVISTQHHPEITLEQIQRNIKEHVINPVVPEELIDEETKYFINPTGRFVIGGPQGDAGLTGRKIIVDTYGGYARHGGGAFSGKDATKVDRSAAYAARYVAKNIVAAELADSCEVQLAYAIGVAQPVSISINTFGSGKASEEKLIEVVRNNFDLRPAGIIKMLDLRRPIYKQTAAYGHFGRHDVDLPWERTDKAEQLRKEALGE.

H17 is an ATP binding site. D19 contributes to the Mg(2+) binding site. E45 provides a ligand contact to K(+). E58 and Q101 together coordinate L-methionine. The segment at 101 to 111 (QSADIAMGVDQ) is flexible loop. ATP-binding positions include 177–179 (DGK), 244–245 (RF), D253, 259–260 (RK), A276, and K280. Position 253 (D253) interacts with L-methionine. K284 is an L-methionine binding site.

The protein belongs to the AdoMet synthase family. As to quaternary structure, homotetramer; dimer of dimers. The cofactor is Mg(2+). It depends on K(+) as a cofactor.

Its subcellular location is the cytoplasm. The catalysed reaction is L-methionine + ATP + H2O = S-adenosyl-L-methionine + phosphate + diphosphate. It functions in the pathway amino-acid biosynthesis; S-adenosyl-L-methionine biosynthesis; S-adenosyl-L-methionine from L-methionine: step 1/1. Catalyzes the formation of S-adenosylmethionine (AdoMet) from methionine and ATP. The overall synthetic reaction is composed of two sequential steps, AdoMet formation and the subsequent tripolyphosphate hydrolysis which occurs prior to release of AdoMet from the enzyme. This is S-adenosylmethionine synthase from Bacillus subtilis (strain 168).